A 251-amino-acid chain; its full sequence is Phosphosulfolactate synthase (251 aa).

This sequence belongs to the phosphosulfolactate synthase family. In terms of assembly, homotrimer. The cofactor is Mg(2+).

The catalysed reaction is (2R)-O-phospho-3-sulfolactate = phosphoenolpyruvate + sulfite + H(+). It functions in the pathway cofactor biosynthesis; coenzyme M biosynthesis; sulfoacetaldehyde from phosphoenolpyruvate and sulfite: step 1/4. Catalyzes the addition of sulfite to phosphoenolpyruvate (PEP) to yield (2R)-phospho-3-sulfolactate (PSL). The polypeptide is Phosphosulfolactate synthase (comA) (Methanocaldococcus jannaschii (strain ATCC 43067 / DSM 2661 / JAL-1 / JCM 10045 / NBRC 100440) (Methanococcus jannaschii)).